Consider the following 1334-residue polypeptide: MVLTQQENLSVLVGQRFVCLLGKDLQVDPDTVSKWPWKSGIVRAASHKDLHCPEIKIFVEYDDESWENRTWLELYGPTVKMFLVEHNLVLADHASPSNPSVSVQCPAMVYKVLVGKFSLGSTACLQFLGEKDKVFLSKELVKPVRDRETLKQFMQDNKTFNKAFQELIRKSVDESRLLQAARNIISMPINVYSMDPSMQWFSGTITNVRTASRALEIKCEQLPSLKIIDPALLHVVLVHNYGDQNDKSKKPRASKRKSQDTESEDQTEVKQTRNEEVPSKDVTQKTSFLTYRRDDGKTLVVVDNPKATTNNLFNYMTPATEDQQKVQQSLSSKQSVPVGFGETLLGCAATTPGIQNAATPPPANSPPSFGAATPQGKGSQNLPGDTTVLNGDANREETNLFLSAAASQGNKRSMGFGIMESPSTFSSLSTMPSWSGQPNSENGLKSENLFAAFTKSSTVFPKGFEFSVKSFPEQKMLSVTDSPKTALQKTCVPQQEQNVIRKPENNHTSVKAIKPQEPPYTKSPNKTDGVTYPKSILLNPQKLKRLQQSGDCFVQDGSCNNIAPHLHKCRECRLDRFGRSREQRDSAVFCRFFHFRRLHFNKHGMLKEGGFLTPNKYDAEAINLWLPLASSVVDLDLDTAKYILANIGDHFCKLVMSEKEVMSSTDPSKQVAWKRAVRGVREMCDACDTTIFNLHWVCPKCGFGVCVDCYRMRKKSLSSGEEGNEMFSWLKCMKGQLHEPENLMPTQIVPGKALYDVCDIVHSVRGRWGIKSNCSCSNKHMRPVSKPVVKEEVKPSTPEPEPIKSLLAQPNVCTVPDPPAIPNKPPTPACSSPLSWLTNFPQTIVNKENKDNLFASTSKSEHKPLPSFASFGKPVSALQTFGSSILTPTTSNNSGFLRNLLNASTLKQETSDKSTPKILDDIFASLVQSRPLSDFDRKPQGLPIQPSLMGFNTPHYWLCDNRLLCLQDPNNKSNWNVFRECWKQGQPVMVSGVHNNLNSELWRPESFRREFGDQEADLVNCRTNDIITGATVGDFWDGFEDIPGRLKNDTGESMVLKLKDWPPGEDFRDTMLSRFEDLMNNIPLPEYTRREGKLNLAARLPTYFVRPDLGPKMYNAYGLITPEDRKYGTTNLHLDVSDAANVMVYVGIPKGEHDQDQEVLRTIQDGDADELTIKRFIEFKEKPGALWHIYAAKDTEKIRQFLKKVAEEEGHENPPDHDPIHDQSWYLDNILRKRLLQEHGVQGWAIVQFLGDAVFIPAGAPHQVHNLYSCIKVAEDFVSPEHVKHCFCLTQEFRYLSHTHTNHEDKLQVKNVIYHAVKDSIAILKANESSLGKL.

3 disordered regions span residues 243–288 (DQND…KTSF), 352–382 (PGIQNAATPPPANSPPSFGAATPQGKGSQNL), and 514–533 (KPQEPPYTKSPNKTDGVTYP). Residues 267–283 (TEVKQTRNEEVPSKDVT) are compositionally biased toward basic and acidic residues. The segment at 684 to 709 (CDACDTTIFNLHWVCPKCGFGVCVDC) adopts a C6-type zinc-finger fold. The LXXLL motif motif lies at 897-901 (LRNLL). One can recognise a JmjC domain in the interval 1089 to 1294 (RREGKLNLAA…HCFCLTQEFR (206 aa)). His-1133, Asp-1135, and His-1262 together coordinate Fe cation.

This sequence belongs to the JHDM2 histone demethylase family. The cofactor is Fe(2+).

It localises to the cytoplasm. Its subcellular location is the nucleus. It carries out the reaction N(6),N(6)-dimethyl-L-lysyl(9)-[histone H3] + 2 2-oxoglutarate + 2 O2 = L-lysyl(9)-[histone H3] + 2 formaldehyde + 2 succinate + 2 CO2. In terms of biological role, histone demethylase that specifically demethylates 'Lys-9' of histone H3, thereby playing a central role in histone code. Preferentially demethylates mono- and dimethylated H3 'Lys-9' residue, with a preference for dimethylated residue, while it has weak or no activity on trimethylated H3 'Lys-9'. Demethylation of Lys residue generates formaldehyde and succinate. The polypeptide is Lysine-specific demethylase 3A-B (kdm3a-b) (Xenopus laevis (African clawed frog)).